The chain runs to 285 residues: Nucleotide-binding protein GSU1884 (285 aa).

Residue 8-15 coordinates ATP; sequence GLSGSGKS. 59 to 62 is a GTP binding site; that stretch reads DIRG.

It belongs to the RapZ-like family.

Its function is as follows. Displays ATPase and GTPase activities. The protein is Nucleotide-binding protein GSU1884 of Geobacter sulfurreducens (strain ATCC 51573 / DSM 12127 / PCA).